Reading from the N-terminus, the 342-residue chain is Pre-mRNA-splicing factor 18 (342 aa).

Met-1 carries the post-translational modification N-acetylmethionine.

This sequence belongs to the PRP18 family. In terms of assembly, heterodimer with PPIH. Interacts with PRPF4 and with the spliceosome. Part of a complex containing U4/U6 snRNPs.

Its subcellular location is the nucleus speckle. Its function is as follows. Participates in the second step of pre-mRNA splicing. The sequence is that of Pre-mRNA-splicing factor 18 (Prpf18) from Mus musculus (Mouse).